We begin with the raw amino-acid sequence, 391 residues long: 3-ketoacyl-CoA thiolase (391 aa).

Catalysis depends on Cys95, which acts as the Acyl-thioester intermediate. Residues His347 and Cys377 each act as proton acceptor in the active site.

Belongs to the thiolase-like superfamily. Thiolase family. As to quaternary structure, heterotetramer of two alpha chains (FadB) and two beta chains (FadA).

Its subcellular location is the cytoplasm. The enzyme catalyses an acyl-CoA + acetyl-CoA = a 3-oxoacyl-CoA + CoA. The protein operates within lipid metabolism; fatty acid beta-oxidation. In terms of biological role, catalyzes the final step of fatty acid oxidation in which acetyl-CoA is released and the CoA ester of a fatty acid two carbons shorter is formed. This chain is 3-ketoacyl-CoA thiolase, found in Pseudomonas fluorescens (strain ATCC BAA-477 / NRRL B-23932 / Pf-5).